The primary structure comprises 237 residues: Small ribosomal subunit protein uS5 (237 aa).

Positions Met-1–Gly-59 are disordered. Basic and acidic residues predominate over residues Pro-20 to Asn-55. An S5 DRBM domain is found at Leu-63 to Val-126.

The protein belongs to the universal ribosomal protein uS5 family. As to quaternary structure, part of the 30S ribosomal subunit. Contacts proteins S4 and S8.

With S4 and S12 plays an important role in translational accuracy. In terms of biological role, located at the back of the 30S subunit body where it stabilizes the conformation of the head with respect to the body. In Novosphingobium aromaticivorans (strain ATCC 700278 / DSM 12444 / CCUG 56034 / CIP 105152 / NBRC 16084 / F199), this protein is Small ribosomal subunit protein uS5.